The chain runs to 327 residues: Cobalamin biosynthesis protein CobD (327 aa).

A run of 4 helical transmembrane segments spans residues 60 to 80, 82 to 102, 159 to 179, and 304 to 324; these read GMWLTIGLVMACVVLGLVLEL, LPFAGTAGAVAEILIVTVLLA, DGIVAPAFWFLVGGLPGLFAY, and LFWSTMSLMTGLVIAASLIGL.

This sequence belongs to the CobD/CbiB family.

It is found in the cell membrane. The protein operates within cofactor biosynthesis; adenosylcobalamin biosynthesis. In terms of biological role, converts cobyric acid to cobinamide by the addition of aminopropanol on the F carboxylic group. The chain is Cobalamin biosynthesis protein CobD from Brucella anthropi (strain ATCC 49188 / DSM 6882 / CCUG 24695 / JCM 21032 / LMG 3331 / NBRC 15819 / NCTC 12168 / Alc 37) (Ochrobactrum anthropi).